We begin with the raw amino-acid sequence, 375 residues long: MIDLFDFVVLSSFIILLPLVTDFLNNTFPNAKIGRLAQEVVGMILVFFIVSLIFAGVSLWYTHFLPFYYTKSLLISFDTLNLLDLLKFINTDNNNNSGSSIFNKITFYFHIFFTIQLVVNLYYYYYQTITADNFLPKISKNKQIQLFASETTTTTTTTTDNINEKKNKLCGLCDQVSDGKWSTINKPKSHHCRICKRCIDSMDHHCPFAANCIGINNHHYFILFIGYTVMALIYACYLSFFPYYHCIVNYKNYVSLSFTNDNDNDNNNNNNFKQLAQSCAKFNKYSFIFLCCCLIVTASFGILLFQTYLIITNSKTVQLLSRLKKSKSFLDWFKWLYQNFKQNASINNIYSLFPNFKFYNLIIPYYKRKINKLNK.

A run of 2 helical transmembrane segments spans residues 4–24 (LFDF…TDFL) and 40–60 (VVGM…VSLW). The N-linked (GlcNAc...) asparagine glycan is linked to N95. A run of 3 helical transmembrane segments spans residues 105-125 (ITFY…YYYY), 221-241 (FILF…LSFF), and 285-305 (YSFI…ILLF). Residues 176 to 226 (VSDGKWSTINKPKSHHCRICKRCIDSMDHHCPFAANCIGINNHHYFILFIG) enclose the DHHC domain. An N-linked (GlcNAc...) asparagine glycan is attached at N343.

The protein belongs to the DHHC palmitoyltransferase family.

The protein resides in the membrane. The enzyme catalyses L-cysteinyl-[protein] + hexadecanoyl-CoA = S-hexadecanoyl-L-cysteinyl-[protein] + CoA. This Dictyostelium discoideum (Social amoeba) protein is Putative ZDHHC-type palmitoyltransferase 8.